We begin with the raw amino-acid sequence, 330 residues long: 1-aminocyclopropane-1-carboxylate oxidase 2 (330 aa).

The Fe2OG dioxygenase domain occupies Pro-153–Pro-253. Fe cation-binding residues include His-177, Asp-179, and His-234.

Belongs to the iron/ascorbate-dependent oxidoreductase family. As to quaternary structure, monomer. The cofactor is Fe cation.

It carries out the reaction 1-aminocyclopropane-1-carboxylate + L-ascorbate + O2 = ethene + L-dehydroascorbate + hydrogen cyanide + CO2 + 2 H2O. Its pathway is alkene biosynthesis; ethylene biosynthesis via S-adenosyl-L-methionine; ethylene from S-adenosyl-L-methionine: step 2/2. The sequence is that of 1-aminocyclopropane-1-carboxylate oxidase 2 (ACO2) from Malus domestica (Apple).